A 111-amino-acid polypeptide reads, in one-letter code: Large ribosomal subunit protein uL22 (111 aa).

This sequence belongs to the universal ribosomal protein uL22 family. As to quaternary structure, part of the 50S ribosomal subunit.

Functionally, this protein binds specifically to 23S rRNA; its binding is stimulated by other ribosomal proteins, e.g. L4, L17, and L20. It is important during the early stages of 50S assembly. It makes multiple contacts with different domains of the 23S rRNA in the assembled 50S subunit and ribosome. Its function is as follows. The globular domain of the protein is located near the polypeptide exit tunnel on the outside of the subunit, while an extended beta-hairpin is found that lines the wall of the exit tunnel in the center of the 70S ribosome. This is Large ribosomal subunit protein uL22 from Geobacter sulfurreducens (strain ATCC 51573 / DSM 12127 / PCA).